The sequence spans 332 residues: Holliday junction branch migration complex subunit RuvB (332 aa).

The interval 1 to 181 (MARILDNDVM…FGITGHMEYY (181 aa)) is large ATPase domain (RuvB-L). ATP contacts are provided by residues Leu20, Arg21, Gly62, Lys65, Thr66, Thr67, 128–130 (EDF), Arg171, Tyr181, and Arg218. Position 66 (Thr66) interacts with Mg(2+). Residues 182–252 (QEKDLTEIVE…ITDRALTMLD (71 aa)) form a small ATPAse domain (RuvB-S) region. The head domain (RuvB-H) stretch occupies residues 255 to 332 (REGLDYIDQK…RHLGYPYQNT (78 aa)). Residues Arg291, Arg310, Arg312, and Arg315 each coordinate DNA.

Belongs to the RuvB family. As to quaternary structure, homohexamer. Forms an RuvA(8)-RuvB(12)-Holliday junction (HJ) complex. HJ DNA is sandwiched between 2 RuvA tetramers; dsDNA enters through RuvA and exits via RuvB. An RuvB hexamer assembles on each DNA strand where it exits the tetramer. Each RuvB hexamer is contacted by two RuvA subunits (via domain III) on 2 adjacent RuvB subunits; this complex drives branch migration. In the full resolvosome a probable DNA-RuvA(4)-RuvB(12)-RuvC(2) complex forms which resolves the HJ.

The protein localises to the cytoplasm. The enzyme catalyses ATP + H2O = ADP + phosphate + H(+). In terms of biological role, the RuvA-RuvB-RuvC complex processes Holliday junction (HJ) DNA during genetic recombination and DNA repair, while the RuvA-RuvB complex plays an important role in the rescue of blocked DNA replication forks via replication fork reversal (RFR). RuvA specifically binds to HJ cruciform DNA, conferring on it an open structure. The RuvB hexamer acts as an ATP-dependent pump, pulling dsDNA into and through the RuvAB complex. RuvB forms 2 homohexamers on either side of HJ DNA bound by 1 or 2 RuvA tetramers; 4 subunits per hexamer contact DNA at a time. Coordinated motions by a converter formed by DNA-disengaged RuvB subunits stimulates ATP hydrolysis and nucleotide exchange. Immobilization of the converter enables RuvB to convert the ATP-contained energy into a lever motion, pulling 2 nucleotides of DNA out of the RuvA tetramer per ATP hydrolyzed, thus driving DNA branch migration. The RuvB motors rotate together with the DNA substrate, which together with the progressing nucleotide cycle form the mechanistic basis for DNA recombination by continuous HJ branch migration. Branch migration allows RuvC to scan DNA until it finds its consensus sequence, where it cleaves and resolves cruciform DNA. This is Holliday junction branch migration complex subunit RuvB from Streptococcus pyogenes serotype M3 (strain ATCC BAA-595 / MGAS315).